The sequence spans 81 residues: Acyl carrier protein (81 aa).

A Carrier domain is found at 2 to 77; sequence ASIEERVVDI…EAIDFIEKEK (76 aa). Ser-37 carries the O-(pantetheine 4'-phosphoryl)serine modification.

It belongs to the acyl carrier protein (ACP) family. Post-translationally, 4'-phosphopantetheine is transferred from CoA to a specific serine of apo-ACP by AcpS. This modification is essential for activity because fatty acids are bound in thioester linkage to the sulfhydryl of the prosthetic group.

The protein localises to the cytoplasm. Its pathway is lipid metabolism; fatty acid biosynthesis. Its function is as follows. Carrier of the growing fatty acid chain in fatty acid biosynthesis. The polypeptide is Acyl carrier protein (Rhodopirellula baltica (strain DSM 10527 / NCIMB 13988 / SH1)).